Here is a 404-residue protein sequence, read N- to C-terminus: Probable protein phosphatase 2C 30 (404 aa).

Positions 42-52 are enriched in basic and acidic residues; that stretch reads AERGAEEETSG. Positions 42–72 are disordered; that stretch reads AERGAEEETSGKRRRLDGGGGEASTDEEDRE. The PPM-type phosphatase domain maps to 77–399; that stretch reads RYGFTSVCGR…DNVSVVVVNL (323 aa). The Mn(2+) site is built by Asp111, Gly112, and Asp298. The segment at 321-369 is disordered; it reads GRRERNRSSPTSNLSPRQSSSSGDEAPNDGAPSAAAGSESDEESAAEED. A compositionally biased stretch (polar residues) spans 330-343; sequence PTSNLSPRQSSSSG. Asp390 serves as a coordination point for Mn(2+).

The protein belongs to the PP2C family. As to quaternary structure, interacts with PYL5 and SAPK2. Binding to PYL5 is dependent on the presence of abscisic acid (ABA). Interacts with PYL3, PYL5 and PYL9. Binding to PYL5 and PYL9 is dependent on the presence of ABA. Mg(2+) is required as a cofactor. The cofactor is Mn(2+).

It is found in the nucleus. It carries out the reaction O-phospho-L-seryl-[protein] + H2O = L-seryl-[protein] + phosphate. The enzyme catalyses O-phospho-L-threonyl-[protein] + H2O = L-threonyl-[protein] + phosphate. Together with ABI5, PYL5 and SAPK2, is part of an abscisic acid (ABA) signaling unit that modulates seed germination and early seedling growth. This is Probable protein phosphatase 2C 30 from Oryza sativa subsp. japonica (Rice).